The chain runs to 381 residues: MKGSQASDDATGSLGPGRLQLPAMRVLVAPDCYGDSLSAVEAAAAIATGWTRSRPGDSFIVAPQSDGGPGFVEVLGSRLGETRRLRVCGPLNTVVNAAWVFDPGSATAYLECAQACGLGLLGGPPTPETALAAHSKGVGQLIAAALRAGAARIVVGLGGSACTDGGKGMIAELGGLDAARRQLADVEVIAASDVEYPLLGPWGTARVFAPQKGADMATVAVLEGRLAAWAIELDAAAGRGVSAEPGAGAAGGIGAGLLAVGGRYQSGAAIIAEHTHFADDLADAELIVTGEGRFDEQSLHGKVVGAIAAAARPLAIPVIVLAGQVSLDKSALRSAGIMAALSIAEYAGSVRLALADAANQLMGLASQVAARLGNSGPSGYR.

It belongs to the glycerate kinase type-1 family.

This is an uncharacterized protein from Mycobacterium tuberculosis (strain CDC 1551 / Oshkosh).